A 473-amino-acid chain; its full sequence is Histidinol dehydrogenase, chloroplastic (473 aa).

The interval Met1–Leu28 is disordered. The NAD(+) site is built by Tyr162, Gln224, and Asn247. Residues Ser273, Gln295, and His298 each contribute to the substrate site. Zn(2+) contacts are provided by Gln295 and His298. Residues Glu363 and His364 each act as proton acceptor in the active site. Substrate-binding residues include His364, Asp397, Glu451, and His456. Residue Asp397 coordinates Zn(2+). Residue His456 coordinates Zn(2+).

This sequence belongs to the histidinol dehydrogenase family. The cofactor is Zn(2+).

The protein resides in the plastid. Its subcellular location is the chloroplast. It carries out the reaction L-histidinol + 2 NAD(+) + H2O = L-histidine + 2 NADH + 3 H(+). Its pathway is amino-acid biosynthesis; L-histidine biosynthesis; L-histidine from 5-phospho-alpha-D-ribose 1-diphosphate: step 9/9. Catalyzes the sequential NAD-dependent oxidations of L-histidinol to L-histidinaldehyde and then to L-histidine. This Oryza sativa subsp. japonica (Rice) protein is Histidinol dehydrogenase, chloroplastic (HDH).